Reading from the N-terminus, the 447-residue chain is MHTVIPHTHDTPAAAPVRSGAVAVVVGTGRSGTAAARLLHHLGASVRIVEKDESRVSAEFASLAARLGFDCRYGSHSAEQFAGADILVPSPGVPVASLLPYLDASRPPEIMAEIDLAARCVTSPVLAVTGTSGKTTTVSLCAAMLRAAGKRVFLGGNIGTPLSEYVLDVAAGEAPADVLVLEVSSFQLQTCTTLRPEVAVLINISANHLDYHADMQEYLDAKFRLFALQGPDDLAVLQSGMEELADRYALAARREFFDAVRRFPRTALLGSHNMANIEAAWLACRAFGVTQSQAAQAVEEFAPLEHRLEKVDEVAGVLFVNDSKSTTVDSMKAALESFDRPVLLLCGGKWKGGDLVSLIPVVRRHAKAVGLFGASREIFEHAWADVVPMSWDHDLQTAFRRMTAMAQPGDVVLMSPATSSYDLYSNYKERGGDFKRNVAAWKAERDD.

130–136 (GTSGKTT) contributes to the ATP binding site.

It belongs to the MurCDEF family.

Its subcellular location is the cytoplasm. The enzyme catalyses UDP-N-acetyl-alpha-D-muramoyl-L-alanine + D-glutamate + ATP = UDP-N-acetyl-alpha-D-muramoyl-L-alanyl-D-glutamate + ADP + phosphate + H(+). Its pathway is cell wall biogenesis; peptidoglycan biosynthesis. In terms of biological role, cell wall formation. Catalyzes the addition of glutamate to the nucleotide precursor UDP-N-acetylmuramoyl-L-alanine (UMA). The protein is UDP-N-acetylmuramoylalanine--D-glutamate ligase of Oleidesulfovibrio alaskensis (strain ATCC BAA-1058 / DSM 17464 / G20) (Desulfovibrio alaskensis).